The chain runs to 304 residues: Probable HTH-type transcriptional regulator LgoR (304 aa).

The 70-residue stretch at 1–70 folds into the HTH gntR-type domain; sequence MSRSQNLRHN…VGNDYVIARK (70 aa). Residues 31–50 constitute a DNA-binding region (H-T-H motif); the sequence is QSALAEMYNISRTTVRHILS.

Functionally, may be a positive transcriptional regulator for lgoD and/or lgoT. Is essential for growth on L-galactonate as the sole carbon source. The sequence is that of Probable HTH-type transcriptional regulator LgoR (lgoR) from Escherichia coli (strain K12).